A 189-amino-acid chain; its full sequence is NADH-quinone oxidoreductase subunit B (189 aa).

[4Fe-4S] cluster is bound by residues Cys-39, Cys-40, Cys-104, and Cys-135.

The protein belongs to the complex I 20 kDa subunit family. In terms of assembly, NDH-1 is composed of 14 different subunits. Subunits NuoB, C, D, E, F, and G constitute the peripheral sector of the complex. [4Fe-4S] cluster is required as a cofactor.

The protein resides in the cell inner membrane. It catalyses the reaction a quinone + NADH + 5 H(+)(in) = a quinol + NAD(+) + 4 H(+)(out). Functionally, NDH-1 shuttles electrons from NADH, via FMN and iron-sulfur (Fe-S) centers, to quinones in the respiratory chain. The immediate electron acceptor for the enzyme in this species is believed to be a menaquinone. Couples the redox reaction to proton translocation (for every two electrons transferred, four hydrogen ions are translocated across the cytoplasmic membrane), and thus conserves the redox energy in a proton gradient. The sequence is that of NADH-quinone oxidoreductase subunit B from Pelodictyon phaeoclathratiforme (strain DSM 5477 / BU-1).